The following is a 135-amino-acid chain: Large ribosomal subunit protein uL16c (135 aa).

Residues 1–17 (MLSPKRTRFRKQHRGRM) show a composition bias toward basic residues. The interval 1 to 20 (MLSPKRTRFRKQHRGRMKGT) is disordered.

It belongs to the universal ribosomal protein uL16 family. In terms of assembly, part of the 50S ribosomal subunit.

The protein localises to the plastid. It is found in the chloroplast. This Lemna minor (Common duckweed) protein is Large ribosomal subunit protein uL16c.